A 184-amino-acid chain; its full sequence is Inner membrane-spanning protein YciB (184 aa).

5 consecutive transmembrane segments (helical) span residues 19 to 39, 52 to 72, 76 to 96, 123 to 143, and 151 to 171; these read LVGIREAAITLIIATLIQLLI, LFMGIAVVFFGTLTAYFNQLE, WKVTIVYAIFALVLLVSQYGF, LGWALFFLLCMLINLYISQYL, and FKTFGILGMTLIATIITGIYI.

This sequence belongs to the YciB family.

It is found in the cell inner membrane. In terms of biological role, plays a role in cell envelope biogenesis, maintenance of cell envelope integrity and membrane homeostasis. The polypeptide is Inner membrane-spanning protein YciB (Pasteurella multocida (strain Pm70)).